The chain runs to 293 residues: tRNA (guanine(9)-N1)-methyltransferase (293 aa).

Positions 1–31 (MSNDEINQNEEKVKRTPPLPPVPEGMSKKQW) are disordered. Threonine 16 bears the Phosphothreonine mark. Residues 32-61 (KKMCKRQRWEENKAKYNAERRVKKKRLRHE) are a coiled coil. The 197-residue stretch at 83–279 (EPRINVNQTD…SVLPPRKLDA (197 aa)) folds into the SAM-dependent MTase TRM10-type domain. S-adenosyl-L-methionine contacts are provided by residues 186–187 (LT), glycine 206, 210–214 (DKNRY), cysteine 218, leucine 232, and 244–246 (RVL). The active-site Proton acceptor is aspartate 210. Position 283 is a phosphoserine (serine 283).

This sequence belongs to the class IV-like SAM-binding methyltransferase superfamily. TRM10 family. Monomer.

It localises to the cytoplasm. Its subcellular location is the nucleus. The enzyme catalyses guanosine(9) in tRNA + S-adenosyl-L-methionine = N(1)-methylguanosine(9) in tRNA + S-adenosyl-L-homocysteine + H(+). S-adenosyl-L-methionine-dependent guanine N(1)-methyltransferase that catalyzes the formation of N(1)-methylguanine at position 9 (m1G9) in cytoplasmic tRNAs. The protein is tRNA (guanine(9)-N1)-methyltransferase of Saccharomyces cerevisiae (strain ATCC 204508 / S288c) (Baker's yeast).